The sequence spans 485 residues: Sodium-coupled neutral amino acid symporter 1 (485 aa).

Residues 1-74 (MMHFKSGLEL…EYIPGTTSLG (74 aa)) are Cytoplasmic-facing. Serine 6 is modified (phosphoserine). Threonine 11 carries the phosphothreonine modification. 4 positions are modified to phosphoserine: serine 25, serine 28, serine 49, and serine 52. Threonine 54 is subject to Phosphothreonine. Serine 56 carries the phosphoserine modification. A helical transmembrane segment spans residues 75–97 (MSVFNLSNAIMGSGILGLAFALA). The Extracellular segment spans residues 98-112 (NTGILLFLILLTSVT). A helical membrane pass occupies residues 113–133 (LLSIYSINLLLICSKETGCMV). Topologically, residues 134-148 (YEKLGEQVFGTTGKL) are cytoplasmic. The helical transmembrane segment at 149–169 (VIFGATSLQNTGAMLSYLFIV) threads the bilayer. Residues 170 to 188 (KNELPSAIKSLMGEEDAFS) are Extracellular-facing. The helical transmembrane segment at 189–211 (AWYVDGRVLVVMVTFGIILPLCL) threads the bilayer. Residues 212-216 (LKNLG) lie on the Cytoplasmic side of the membrane. Residues 217–237 (YLGYTSGFSLSCMMFFLIVVI) form a helical membrane-spanning segment. At 238-273 (YKKFQTPCMSVEQNSTVSANVTDACTPKYVTFNSKT) the chain is on the extracellular side. Cysteine 245 and cysteine 262 are joined by a disulfide. Asparagine 251 and asparagine 257 each carry an N-linked (GlcNAc...) asparagine glycan. Residues 274–294 (VYALPTIAFAFVCHPSVLPIY) traverse the membrane as a helical segment. The Cytoplasmic segment spans residues 295–310 (SELKDRSQKKMQMVSN). A helical membrane pass occupies residues 311-331 (ISFFAMFVMYFLTAIFGYLTF). Over 332 to 348 (YEKVQSDLLHKYQSTGD) the chain is Extracellular. The chain crosses the membrane as a helical span at residues 349–369 (ILILTVRLAVIVAVILTVPVL). The Cytoplasmic portion of the chain corresponds to 370 to 391 (FFTVRSSLFELAKKTKFHLCRH). The chain crosses the membrane as a helical span at residues 392–412 (VLVTIILLIIINLLVIFIPSM). Residues 413-414 (KD) lie on the Extracellular side of the membrane. Residues 415–435 (IFGVVGVTSANMLIFILPSSL) traverse the membrane as a helical segment. The Cytoplasmic portion of the chain corresponds to 436-450 (YLKITNQDGDKGTQR). The chain crosses the membrane as a helical span at residues 451–471 (IWAALFLGLGVLFSLISIPLV). Residues 472-485 (IYDWACSSGTDEGH) are Extracellular-facing.

This sequence belongs to the amino acid/polyamine transporter 2 family. In terms of processing, N-glycosylation plays an important role in the L-glutamine transport. In terms of tissue distribution, specifically expressed in brain and retina (at protein level). Also detected in spleen, small intestine and lung.

It localises to the cell membrane. The catalysed reaction is L-glutamine(in) + Na(+)(in) = L-glutamine(out) + Na(+)(out). It catalyses the reaction L-alanine(in) + Na(+)(in) = L-alanine(out) + Na(+)(out). It carries out the reaction L-histidine(in) + Na(+)(in) = L-histidine(out) + Na(+)(out). The enzyme catalyses L-asparagine(in) + Na(+)(in) = L-asparagine(out) + Na(+)(out). The catalysed reaction is L-serine(in) + Na(+)(in) = L-serine(out) + Na(+)(out). It catalyses the reaction L-cysteine(in) + Na(+)(in) = L-cysteine(out) + Na(+)(out). It carries out the reaction L-methionine(in) + Na(+)(in) = L-methionine(out) + Na(+)(out). The enzyme catalyses glycine(in) + Na(+)(in) = glycine(out) + Na(+)(out). The catalysed reaction is L-threonine(in) + Na(+)(in) = L-threonine(out) + Na(+)(out). It catalyses the reaction L-proline(in) + Na(+)(in) = L-proline(out) + Na(+)(out). Inhibited by alpha-(methylamino)isobutyric acid (MeAIB). Inhibited by lithium, potassium, choline ions, N-methylglucamine. The pH dependence has an allosteric effect on the transport. Its function is as follows. Symporter that cotransports short-chain neutral amino acids and sodium ions from the extraccellular to the intracellular side of the cell membrane. The transport is elctrogenic, pH dependent and driven by the Na(+) electrochemical gradient. Participates in the astroglia-derived glutamine transport into GABAergic interneurons for neurotransmitter GABA de novo synthesis. May also contributes to amino acid transport in placental trophoblast. Regulates synaptic plasticity. This chain is Sodium-coupled neutral amino acid symporter 1, found in Mus musculus (Mouse).